The following is a 389-amino-acid chain: Chalcone synthase E (389 aa).

Cys-164 is a catalytic residue.

It belongs to the thiolase-like superfamily. Chalcone/stilbene synthases family.

The catalysed reaction is (E)-4-coumaroyl-CoA + 3 malonyl-CoA + 3 H(+) = 2',4,4',6'-tetrahydroxychalcone + 3 CO2 + 4 CoA. The protein operates within secondary metabolite biosynthesis; flavonoid biosynthesis. In terms of biological role, the primary product of this enzyme is 4,2',4',6'-tetrahydroxychalcone (also termed naringenin-chalcone or chalcone) which can under specific conditions spontaneously isomerize into naringenin. The chain is Chalcone synthase E (CHSE) from Ipomoea purpurea (Common morning glory).